We begin with the raw amino-acid sequence, 261 residues long: Kallikrein 1-related peptidase b11 (261 aa).

Positions 1-18 are cleaved as a signal peptide; sequence MWFLILFLALSLGGIDAA. Positions 19-24 are cleaved as a propeptide — activation peptide; that stretch reads PPVQSR. A Peptidase S1 domain is found at 25–258; the sequence is IVGGFNCEKN…FTNWIKDTMA (234 aa). 5 disulfide bridges follow: Cys-31–Cys-173, Cys-50–Cys-66, Cys-152–Cys-219, Cys-184–Cys-198, and Cys-209–Cys-234. Residue His-65 is the Charge relay system of the active site. A glycan (N-linked (GlcNAc...) asparagine) is linked at Asn-102. Residue Asp-120 is the Charge relay system of the active site. Ser-213 functions as the Charge relay system in the catalytic mechanism.

The protein belongs to the peptidase S1 family. Kallikrein subfamily.

The enzyme catalyses Preferential cleavage of Arg-|-Xaa bonds in small molecule substrates. Highly selective action to release kallidin (lysyl-bradykinin) from kininogen involves hydrolysis of Met-|-Xaa or Leu-|-Xaa.. Glandular kallikreins cleave Met-Lys and Arg-Ser bonds in kininogen to release Lys-bradykinin. The polypeptide is Kallikrein 1-related peptidase b11 (Klk1b11) (Mus musculus (Mouse)).